The sequence spans 122 residues: Allatotropin (122 aa).

The signal sequence occupies residues 1-23 (MRVILAITLLFVAGSFIATASKG). A propeptide spanning residues 24–40 (RNYPRFFKHRMKLREIR) is cleaved from the precursor. Phe-53 is modified (phenylalanine amide). Positions 57 to 122 (ESPAERIPDL…GDDSKKGTIA (66 aa)) are excised as a propeptide.

Expressed in brain and ventral ganglia but not in the retrocerebral complex (at protein level).

Its subcellular location is the secreted. In terms of biological role, neuropeptide stimulator of juvenile hormone synthesis. This Camponotus floridanus (Florida carpenter ant) protein is Allatotropin.